A 154-amino-acid chain; its full sequence is Putative pre-16S rRNA nuclease (154 aa).

The protein belongs to the YqgF nuclease family.

The protein resides in the cytoplasm. In terms of biological role, could be a nuclease involved in processing of the 5'-end of pre-16S rRNA. This chain is Putative pre-16S rRNA nuclease, found in Rickettsia felis (strain ATCC VR-1525 / URRWXCal2) (Rickettsia azadi).